A 179-amino-acid polypeptide reads, in one-letter code: MKFKPNQTRTYDREGFKKRAACLCFRSEQEDEVLLVSSSRYPDQWIVPGGGMEPEEEPGGAAVREVYEEAGVKGKLGRLLGIFENQDRKHRTYVYVLTVTEILEDWEDSVNIGRKREWFKVEDAIKVLQCHKPVHAEYLEKLKLGCSPTNGNSSVPSLPDNNALFVTAAPPSGVPSSIR.

Substrate is bound by residues R9, 17–19 (KKR), and 38–40 (SSR). The region spanning 17–143 (KKRAACLCFR…VHAEYLEKLK (127 aa)) is the Nudix hydrolase domain. Residues G49 and E65 each coordinate Mg(2+). The Nudix box motif lies at 50-71 (GGMEPEEEPGGAAVREVYEEAG). The active-site Proton acceptor is E68. E69 provides a ligand contact to Mg(2+). Residues 88-90 (RKH), R114, and K132 each bind substrate.

Belongs to the Nudix hydrolase family. DIPP subfamily. It depends on Mg(2+) as a cofactor. Requires Mn(2+) as cofactor.

It localises to the cytoplasm. The catalysed reaction is diphospho-myo-inositol polyphosphate + H2O = myo-inositol polyphosphate + phosphate.. It catalyses the reaction 5-diphospho-1D-myo-inositol 1,2,3,4,6-pentakisphosphate + H2O = 1D-myo-inositol hexakisphosphate + phosphate + H(+). It carries out the reaction 3,5-bis(diphospho)-1D-myo-inositol 1,2,4,6-tetrakisphosphate + H2O = 3-diphospho-1D-myo-inositol 1,2,4,5,6-pentakisphosphate + phosphate + 2 H(+). The enzyme catalyses 5-diphospho-1D-myo-inositol 1,3,4,6-tetrakisphosphate + H2O = 1D-myo-inositol 1,3,4,5,6-pentakisphosphate + phosphate + H(+). The catalysed reaction is P(1),P(6)-bis(5'-adenosyl) hexaphosphate + H2O = 2 ATP + 2 H(+). It catalyses the reaction P(1),P(5)-bis(5'-adenosyl) pentaphosphate + H2O = ADP + ATP + 2 H(+). It carries out the reaction 5-phospho-alpha-D-ribose 1-diphosphate + H2O = alpha-D-ribose 1,5-bisphosphate + phosphate + H(+). Functionally, cleaves the beta-phosphate from diphosphoinositol polyphosphates such as PP-InsP5 (diphosphoinositol pentakisphosphate), PP-InsP4 (diphosphoinositol tetrakisphosphate) and [PP]2-InsP4 (bisdiphosphoinositol tetrakisphosphate), suggesting that it may play a role in signal transduction. Diadenosine polyphosphates, particularly Ap6A (P(1),P(6)-bis(5a-adenosyl) hexaphosphate) and Ap5A (P(1),P(5)-bis(5'-adenosyl) pentaphosphate) are downstream effectors of a signaling cascade that regulates cardiac KATP channels, can also be substrates, although with lower preference than the diphosphoinositol polyphosphates. Can also catalyze the hydrolysis of 5-phosphoribose 1-diphosphate, generating the glycolytic activator ribose 1,5-bisphosphate. Does not play a role in U8 snoRNA decapping activity. Binds U8 snoRNA. This Mus musculus (Mouse) protein is Diphosphoinositol polyphosphate phosphohydrolase 2.